Consider the following 434-residue polypeptide: Phosphomethylpyrimidine synthase (434 aa).

Residues asparagine 74, methionine 103, tyrosine 132, histidine 171, serine 193–glycine 195, aspartate 234–arginine 237, and glutamate 273 contribute to the substrate site. Residue histidine 277 participates in Zn(2+) binding. Tyrosine 300 is a substrate binding site. Position 341 (histidine 341) interacts with Zn(2+). Cysteine 417, cysteine 420, and cysteine 424 together coordinate [4Fe-4S] cluster.

This sequence belongs to the ThiC family. In terms of assembly, homodimer. [4Fe-4S] cluster serves as cofactor.

The catalysed reaction is 5-amino-1-(5-phospho-beta-D-ribosyl)imidazole + S-adenosyl-L-methionine = 4-amino-2-methyl-5-(phosphooxymethyl)pyrimidine + CO + 5'-deoxyadenosine + formate + L-methionine + 3 H(+). The protein operates within cofactor biosynthesis; thiamine diphosphate biosynthesis. Catalyzes the synthesis of the hydroxymethylpyrimidine phosphate (HMP-P) moiety of thiamine from aminoimidazole ribotide (AIR) in a radical S-adenosyl-L-methionine (SAM)-dependent reaction. The sequence is that of Phosphomethylpyrimidine synthase from Desulfotalea psychrophila (strain LSv54 / DSM 12343).